The following is a 673-amino-acid chain: UvrABC system protein B (673 aa).

Positions 28–414 constitute a Helicase ATP-binding domain; it reads ASILQNKRSQ…EAGGEIVEQL (387 aa). ATP is bound at residue 41 to 48; sequence GITGSGKT. Residues 94 to 117 carry the Beta-hairpin motif; it reads YYDYYQPEAYVPRTDTYIEKDMSI. Positions 433–595 constitute a Helicase C-terminal domain; that stretch reads QVDDCLAEIR…ITPRTVKREI (163 aa). The region spanning 633 to 668 is the UVR domain; it reads RLKIKECEKEMKKAAKEFRFEEAADWRDQMRRYQQI.

The protein belongs to the UvrB family. Forms a heterotetramer with UvrA during the search for lesions. Interacts with UvrC in an incision complex.

The protein localises to the cytoplasm. Functionally, the UvrABC repair system catalyzes the recognition and processing of DNA lesions. A damage recognition complex composed of 2 UvrA and 2 UvrB subunits scans DNA for abnormalities. Upon binding of the UvrA(2)B(2) complex to a putative damaged site, the DNA wraps around one UvrB monomer. DNA wrap is dependent on ATP binding by UvrB and probably causes local melting of the DNA helix, facilitating insertion of UvrB beta-hairpin between the DNA strands. Then UvrB probes one DNA strand for the presence of a lesion. If a lesion is found the UvrA subunits dissociate and the UvrB-DNA preincision complex is formed. This complex is subsequently bound by UvrC and the second UvrB is released. If no lesion is found, the DNA wraps around the other UvrB subunit that will check the other stand for damage. This chain is UvrABC system protein B, found in Protochlamydia amoebophila (strain UWE25).